The chain runs to 44 residues: U9-ctenitoxin-Co1a (44 aa).

4 cysteine pairs are disulfide-bonded: cysteine 3/cysteine 17, cysteine 10/cysteine 23, cysteine 16/cysteine 33, and cysteine 25/cysteine 31.

As to expression, expressed by the venom gland.

It is found in the secreted. Insecticidal neurotoxin that reversibly inhibits the N-methyl-D-aspartate (NMDA)-subtype of ionotropic glutamate receptor (GRIN) and inhibits inactivation of insect sodium channels (Nav). In vivo, is highly toxic to insects. The sequence is that of U9-ctenitoxin-Co1a from Ctenus ornatus (Brazilian spider).